Here is a 42-residue protein sequence, read N- to C-terminus: Photosystem II reaction center protein J (42 aa).

The chain crosses the membrane as a helical span at residues 10-30 (IPLWLVGTVAGILVLGLVGLF).

The protein belongs to the PsbJ family. As to quaternary structure, PSII is composed of 1 copy each of membrane proteins PsbA, PsbB, PsbC, PsbD, PsbE, PsbF, PsbH, PsbI, PsbJ, PsbK, PsbL, PsbM, PsbT, PsbX, PsbY, PsbZ, Psb30/Ycf12, at least 3 peripheral proteins of the oxygen-evolving complex and a large number of cofactors. It forms dimeric complexes.

Its subcellular location is the plastid. The protein resides in the chloroplast thylakoid membrane. Functionally, one of the components of the core complex of photosystem II (PSII). PSII is a light-driven water:plastoquinone oxidoreductase that uses light energy to abstract electrons from H(2)O, generating O(2) and a proton gradient subsequently used for ATP formation. It consists of a core antenna complex that captures photons, and an electron transfer chain that converts photonic excitation into a charge separation. This chain is Photosystem II reaction center protein J, found in Staurastrum punctulatum (Green alga).